The following is a 245-amino-acid chain: Transmembrane and ubiquitin-like domain-containing protein 1 (245 aa).

Residues 2 to 30 (ALIEGVGDEVTVLFAVLACLLVLALAWVS) form a required to release iHOPS from membranes region. The chain crosses the membrane as a helical span at residues 11 to 31 (VTVLFAVLACLLVLALAWVST). Positions 33-100 (TTESTDPQPQ…ASTPPDSPQE (68 aa)) are disordered. Phosphoserine occurs at positions 73, 97, and 126. The Ubiquitin-like domain maps to 102 to 175 (LLLRLKFLND…LHCHVSTRVG (74 aa)). The next 2 membrane-spanning stretches (helical) occupy residues 194 to 214 (IGSL…YCQI) and 219 to 239 (FFPL…SLLA).

In terms of assembly, interacts with EEF1A1, CAMLG, GRIA2 and GRIP1. Interacts with NPM1 and CDKN2A; TMUB1 can enhance interaction between NPM1 and CDKN2A and is proposed to bridge the proteins; proposed to be mediated by iHOPS. Interacts with TUBG1. Interacts with ERLIN2 and AMFR; TMUB1 promotes the interaction of ERLIN2 with AMFR. Isoform 1 (lHOPS) is processed by regulated intramembrane proteolysis (RIP) in the N-terminus to release iHOPS from membranes. In terms of processing, isoform 2 seems to undergo a selective cleavage in the C-terminal region to release an additional cytoplasmic form. As to expression, expressed in adult brain; at protein level. Isoform 1 (lHOPS) is highly expressed in small intestine, stomach and epididymis. Isoform 2 (sHOPS) and iHOPS are abundantly expressed in brain, liver and adrenal gland.

The protein localises to the membrane. The protein resides in the postsynaptic cell membrane. Its subcellular location is the recycling endosome. It is found in the cytoplasm. It localises to the nucleus. The protein localises to the nucleolus. The protein resides in the cytoskeleton. Its subcellular location is the microtubule organizing center. It is found in the centrosome. Its function is as follows. Involved in sterol-regulated ubiquitination and degradation of HMG-CoA reductase HMGCR. Involved in positive regulation of AMPA-selective glutamate receptor GRIA2 recycling to the cell surface. Acts as a negative regulator of hepatocyte growth during regeneration. In terms of biological role, may contribute to the regulation of translation during cell-cycle progression. May contribute to the regulation of cell proliferation. May be involved in centrosome assembly. Modulates stabilization and nucleolar localization of tumor suppressor CDKN2A and enhances association between CDKN2A and NPM1. The sequence is that of Transmembrane and ubiquitin-like domain-containing protein 1 (Tmub1) from Mus musculus (Mouse).